A 387-amino-acid chain; its full sequence is Alanine racemase (387 aa).

K38 serves as the catalytic Proton acceptor; specific for D-alanine. K38 carries the post-translational modification N6-(pyridoxal phosphate)lysine. Residue R136 coordinates substrate. The active-site Proton acceptor; specific for L-alanine is the Y267. M316 contributes to the substrate binding site.

The protein belongs to the alanine racemase family. Requires pyridoxal 5'-phosphate as cofactor.

It catalyses the reaction L-alanine = D-alanine. The protein operates within amino-acid biosynthesis; D-alanine biosynthesis; D-alanine from L-alanine: step 1/1. In terms of biological role, catalyzes the interconversion of L-alanine and D-alanine. May also act on other amino acids. This is Alanine racemase (alr) from Clostridium tetani (strain Massachusetts / E88).